The primary structure comprises 78 residues: RNA-binding protein Hfq (78 aa).

Residues 10 to 69 (DPFLNALRKEHVPVSIYLVNGIKLQGHIESFDQYVVLLRNTVTQMVYKHAISTVVPARAV) enclose the Sm domain.

It belongs to the Hfq family. As to quaternary structure, homohexamer.

Functionally, RNA chaperone that binds small regulatory RNA (sRNAs) and mRNAs to facilitate mRNA translational regulation in response to envelope stress, environmental stress and changes in metabolite concentrations. Also binds with high specificity to tRNAs. The sequence is that of RNA-binding protein Hfq from Janthinobacterium sp. (strain Marseille) (Minibacterium massiliensis).